The chain runs to 150 residues: SsrA-binding protein (150 aa).

Belongs to the SmpB family.

The protein resides in the cytoplasm. Functionally, required for rescue of stalled ribosomes mediated by trans-translation. Binds to transfer-messenger RNA (tmRNA), required for stable association of tmRNA with ribosomes. tmRNA and SmpB together mimic tRNA shape, replacing the anticodon stem-loop with SmpB. tmRNA is encoded by the ssrA gene; the 2 termini fold to resemble tRNA(Ala) and it encodes a 'tag peptide', a short internal open reading frame. During trans-translation Ala-aminoacylated tmRNA acts like a tRNA, entering the A-site of stalled ribosomes, displacing the stalled mRNA. The ribosome then switches to translate the ORF on the tmRNA; the nascent peptide is terminated with the 'tag peptide' encoded by the tmRNA and targeted for degradation. The ribosome is freed to recommence translation, which seems to be the essential function of trans-translation. This is SsrA-binding protein from Coprothermobacter proteolyticus (strain ATCC 35245 / DSM 5265 / OCM 4 / BT).